We begin with the raw amino-acid sequence, 398 residues long: Argininosuccinate synthase (398 aa).

Residues 9–17 and Ala-36 contribute to the ATP site; that span reads AYSGGLDTS. L-citrulline-binding residues include Tyr-87 and Ser-92. ATP is bound at residue Gly-117. The L-aspartate site is built by Thr-119, Asn-123, and Asp-124. Asn-123 lines the L-citrulline pocket. Arg-127, Ser-176, Ser-185, Glu-261, and Tyr-273 together coordinate L-citrulline.

This sequence belongs to the argininosuccinate synthase family. Type 1 subfamily. In terms of assembly, homotetramer.

It is found in the cytoplasm. The enzyme catalyses L-citrulline + L-aspartate + ATP = 2-(N(omega)-L-arginino)succinate + AMP + diphosphate + H(+). The protein operates within amino-acid biosynthesis; L-arginine biosynthesis; L-arginine from L-ornithine and carbamoyl phosphate: step 2/3. In Desulfotalea psychrophila (strain LSv54 / DSM 12343), this protein is Argininosuccinate synthase.